Here is a 1051-residue protein sequence, read N- to C-terminus: Kinesin-like protein KIN-4B (1051 aa).

Residues 1–21 (MESHSSLSSSSSSSPPSSLSS) are disordered. Residues 25 to 380 (CVKVAVNVRP…LKYANRARNI (356 aa)) enclose the Kinesin motor domain. An ATP-binding site is contributed by 104–111 (GQTGSGKT). 2 coiled-coil regions span residues 414–448 (ATSSEEVQVMREKIMKLESANEELSRELHIYRSKR) and 540–644 (RQHF…KMKQ). Residues 916 to 925 (SSSYSGSSRS) show a composition bias toward low complexity. Disordered regions lie at residues 916–946 (SSSYSGSSRSSSKHYGDNNASDDPSSPSSTY) and 1029–1051 (MSKSHHDDEDDHSWNRHSMFQGA).

It belongs to the TRAFAC class myosin-kinesin ATPase superfamily. Kinesin family. KIN-4 subfamily. Homodimer.

In terms of biological role, kinesin-like motor protein involved in the control of the oriented deposition of cellulose microfibrils. The protein is Kinesin-like protein KIN-4B of Arabidopsis thaliana (Mouse-ear cress).